The chain runs to 481 residues: MSENLNREPELNIGYITQVIGPVIDAVFSAGQLPKIYNALEVKSKDGTTIICEVQQLFNDNRVRAIAMSATDGLQRGVEVIDTQAPILVPVGKATLGRIFNVLGQTVDNIEIGTGEDRLPIHRPAPSFTDLETKPAIFETGIKVVDLLAPYRRGGKIGLFGGAGVGKTVLIMELINNIAKAHGGVSVFGGVGERTREGNDLYMEMKESGVINESNLSESKVALVYGQMNEPPGARMRVGLTALTMAEYFRDINRQDVLLFIDNIFRFVQAGSEVSALLGRMPSAVGYQPTLGTEMGALQERITSTTQGSITSIQAVYVPADDLTDPAPATTFAHLDATTVLSRGLAAKGIYPAVDPLDSTSTMLQPVIVGSEHYDTAQLVKKTLQRYKELQDIIAILGIDELSEEDRLVVDRARKIERFLSQPFFVAEVFTGSPGKYVDLENTIKGFNMILNGELDVYQSIAFYLVGDINEAIAKAKTITN.

ATP is bound at residue 161–168; the sequence is GGAGVGKT.

It belongs to the ATPase alpha/beta chains family. In terms of assembly, F-type ATPases have 2 components, CF(1) - the catalytic core - and CF(0) - the membrane proton channel. CF(1) has five subunits: alpha(3), beta(3), gamma(1), delta(1), epsilon(1). CF(0) has four main subunits: a(1), b(1), b'(1) and c(9-12).

Its subcellular location is the plastid. The protein resides in the chloroplast thylakoid membrane. The enzyme catalyses ATP + H2O + 4 H(+)(in) = ADP + phosphate + 5 H(+)(out). Its function is as follows. Produces ATP from ADP in the presence of a proton gradient across the membrane. The catalytic sites are hosted primarily by the beta subunits. The sequence is that of ATP synthase subunit beta, chloroplastic from Dictyota dichotoma.